The primary structure comprises 51 residues: Defensin-like protein 1 (51 aa).

Pyrrolidone carboxylic acid is present on Gln1. 4 cysteine pairs are disulfide-bonded: Cys4–Cys51, Cys15–Cys36, Cys21–Cys45, and Cys25–Cys47.

As to quaternary structure, forms oligomers in its native state.

In terms of biological role, possesses antifungal activity sensitive to inorganic cations. In Sinapis alba (White mustard), this protein is Defensin-like protein 1.